Consider the following 989-residue polypeptide: AP-2 complex subunit alpha-2 (989 aa).

4 HEAT repeats span residues 112 to 149 (EMLP…KEVA), 188 to 225 (VTPD…ENPI), 368 to 402 (IMIK…MCDK), and 403 to 440 (NTCK…KFAS). Residues 610-745 (DNSNTTSNTA…SSSPISSGGS (136 aa)) form a disordered region. The segment covering 611-623 (NSNTTSNTANNSN) has biased composition (low complexity). Polar residues predominate over residues 624 to 638 (MINSQDSKISSGGFN). Positions 639–703 (QSPQPSQQQQ…QPVYQQQQQA (65 aa)) are enriched in low complexity. A compositionally biased stretch (polar residues) spans 704–714 (ESFSPVQSDTV). Residues 715 to 745 (SSFGQQQQQQQGGFSSPTIQASSSPISSGGS) show a composition bias toward low complexity.

It belongs to the adaptor complexes large subunit family. Adaptor protein complex 2 (AP-2) is a heterotetramer composed of two large adaptins (alpha-type and beta-type subunits), a medium adaptin (mu-type subunit AP50) and a small adaptin (sigma-type subunit AP17).

The protein resides in the cell membrane. Its subcellular location is the membrane. The protein localises to the coated pit. In terms of biological role, component of the adaptor complexes which link clathrin to receptors in coated vesicles. Clathrin-associated protein complexes are believed to interact with the cytoplasmic tails of membrane proteins, leading to their selection and concentration. This Dictyostelium discoideum (Social amoeba) protein is AP-2 complex subunit alpha-2 (ap2a1-1).